We begin with the raw amino-acid sequence, 417 residues long: D-inositol 3-phosphate glycosyltransferase (417 aa).

Residue His15 coordinates 1D-myo-inositol 3-phosphate. UDP-N-acetyl-alpha-D-glucosamine-binding positions include 21–22 and Gly29; that span reads QP. Residues 26–31, Lys84, Tyr117, Thr141, and Arg161 each bind 1D-myo-inositol 3-phosphate; that span reads DAGGMN. Positions 241, 246, and 299 each coordinate UDP-N-acetyl-alpha-D-glucosamine. Residues Tyr308, Arg309, and Ala311 each contribute to the Mg(2+) site. Glu321 and Glu329 together coordinate UDP-N-acetyl-alpha-D-glucosamine. Thr335 lines the Mg(2+) pocket.

It belongs to the glycosyltransferase group 1 family. MshA subfamily. As to quaternary structure, homodimer.

It carries out the reaction 1D-myo-inositol 3-phosphate + UDP-N-acetyl-alpha-D-glucosamine = 1D-myo-inositol 2-acetamido-2-deoxy-alpha-D-glucopyranoside 3-phosphate + UDP + H(+). Functionally, catalyzes the transfer of a N-acetyl-glucosamine moiety to 1D-myo-inositol 3-phosphate to produce 1D-myo-inositol 2-acetamido-2-deoxy-glucopyranoside 3-phosphate in the mycothiol biosynthesis pathway. The polypeptide is D-inositol 3-phosphate glycosyltransferase (Xylanimonas cellulosilytica (strain DSM 15894 / JCM 12276 / CECT 5975 / KCTC 9989 / LMG 20990 / NBRC 107835 / XIL07)).